The sequence spans 317 residues: Heme A synthase (317 aa).

Residues 1–6 (MQRSLK) are Cytoplasmic-facing. The chain crosses the membrane as a helical span at residues 7–27 (WFASTTTVAMLFVLIGGALVT). Over 28 to 54 (KTDSGMGCGRSWPLCHGQWIPDDITPQ) the chain is Extracellular. The cysteines at positions 35 and 42 are disulfide-linked. Residues 55–75 (LVIELSHRLVSGLAAIMVLIL) traverse the membrane as a helical segment. Glu-58 is a catalytic residue. His-61 serves as a coordination point for heme o. Over 76 to 91 (CIRSWRVMGHVRETKP) the chain is Cytoplasmic. Residues 92 to 112 (LAVLSFVFLVLQSLIGAAAVV) form a helical membrane-spanning segment. Residues 113-123 (WGQSDFVMALH) are Extracellular-facing. Heme o is bound at residue His-123. A helical transmembrane segment spans residues 124–144 (FGISLISFAAVLLLTLLIFVV). Residues 145–159 (DKKFSPTSLQLDGQM) are Cytoplasmic-facing. A helical transmembrane segment spans residues 160–180 (RFHIYGIIIYSYLVVYTGALV). At 181–214 (RHTNASLACPSWPLCAKSRLLPVQFHEWVQMGHR) the chain is on the extracellular side. A disulfide bond links Cys-189 and Cys-195. Residue His-213 participates in heme b binding. The helical transmembrane segment at 215-235 (LAAAVIIIWIAVATVHAARYY) threads the bilayer. The Cytoplasmic portion of the chain corresponds to 236–243 (REQPVIYY). A helical transmembrane segment spans residues 244 to 264 (GWIISLLLVLAQMVTGALVVF). Over 265–272 (TELNLYIS) the chain is Extracellular. The chain crosses the membrane as a helical span at residues 273–293 (LAHAFFISCLFGVLSYLLLLA). Residue His-275 participates in heme b binding. The Cytoplasmic segment spans residues 294 to 317 (LRTRRRPATAAGRSVEDTASAPLK).

It belongs to the COX15/CtaA family. Type 1 subfamily. As to quaternary structure, interacts with CtaB. The cofactor is heme b.

It localises to the cell membrane. It catalyses the reaction Fe(II)-heme o + 2 A + H2O = Fe(II)-heme a + 2 AH2. It functions in the pathway porphyrin-containing compound metabolism; heme A biosynthesis; heme A from heme O: step 1/1. In terms of biological role, catalyzes the conversion of heme O to heme A by two successive hydroxylations of the methyl group at C8. The first hydroxylation forms heme I, the second hydroxylation results in an unstable dihydroxymethyl group, which spontaneously dehydrates, resulting in the formyl group of heme A. This Geobacillus thermodenitrificans protein is Heme A synthase.